Consider the following 103-residue polypeptide: Small ribosomal subunit protein uS10 (103 aa).

It belongs to the universal ribosomal protein uS10 family. In terms of assembly, part of the 30S ribosomal subunit.

Functionally, involved in the binding of tRNA to the ribosomes. This chain is Small ribosomal subunit protein uS10, found in Stenotrophomonas maltophilia (strain R551-3).